A 68-amino-acid polypeptide reads, in one-letter code: uncharacterized protein (68 aa).

An N-terminal signal peptide occupies residues 1–28; that stretch reads MNKEQSADDPSVDLIRVKNMLNSTISMS.

This is an uncharacterized protein from Escherichia coli (strain K12).